A 218-amino-acid chain; its full sequence is Ribose-5-phosphate isomerase A (218 aa).

Residues 27 to 30, 80 to 83, and 93 to 96 contribute to the substrate site; these read TGST, DGAD, and KGGG. Residue glutamate 102 is the Proton acceptor of the active site. A substrate-binding site is contributed by lysine 120.

The protein belongs to the ribose 5-phosphate isomerase family. Homodimer.

The enzyme catalyses aldehydo-D-ribose 5-phosphate = D-ribulose 5-phosphate. Its pathway is carbohydrate degradation; pentose phosphate pathway; D-ribose 5-phosphate from D-ribulose 5-phosphate (non-oxidative stage): step 1/1. In terms of biological role, catalyzes the reversible conversion of ribose-5-phosphate to ribulose 5-phosphate. This Thiobacillus denitrificans (strain ATCC 25259 / T1) protein is Ribose-5-phosphate isomerase A.